The chain runs to 650 residues: Acetyl-coenzyme A synthetase (650 aa).

Residues 191–194, Thr311, and Asn335 each bind CoA; that span reads RGGR. ATP-binding positions include 387 to 389, 411 to 416, Asp501, and Arg516; these read GEP and DTWWQT. Ser524 contacts CoA. Arg527 contributes to the ATP binding site. Residues Val538, His540, and Ile543 each contribute to the Mg(2+) site. Arg585 provides a ligand contact to CoA. Lys610 bears the N6-acetyllysine mark.

Belongs to the ATP-dependent AMP-binding enzyme family. Mg(2+) is required as a cofactor. Acetylated. Deacetylation by the SIR2-homolog deacetylase activates the enzyme.

It catalyses the reaction acetate + ATP + CoA = acetyl-CoA + AMP + diphosphate. Catalyzes the conversion of acetate into acetyl-CoA (AcCoA), an essential intermediate at the junction of anabolic and catabolic pathways. AcsA undergoes a two-step reaction. In the first half reaction, AcsA combines acetate with ATP to form acetyl-adenylate (AcAMP) intermediate. In the second half reaction, it can then transfer the acetyl group from AcAMP to the sulfhydryl group of CoA, forming the product AcCoA. The chain is Acetyl-coenzyme A synthetase from Vibrio parahaemolyticus serotype O3:K6 (strain RIMD 2210633).